Reading from the N-terminus, the 67-residue chain is MKATDLRQQTTEELNGKVGSWKEELFNLRFQLATGQLENPARIREVRKSIARAKTVLRERELGINNA.

This sequence belongs to the universal ribosomal protein uL29 family.

In Exiguobacterium sibiricum (strain DSM 17290 / CCUG 55495 / CIP 109462 / JCM 13490 / 255-15), this protein is Large ribosomal subunit protein uL29.